Consider the following 312-residue polypeptide: 4-hydroxy-3-methylbut-2-enyl diphosphate reductase (312 aa).

Cys-15 contacts [4Fe-4S] cluster. (2E)-4-hydroxy-3-methylbut-2-enyl diphosphate is bound by residues His-44 and His-77. Dimethylallyl diphosphate-binding residues include His-44 and His-77. Isopentenyl diphosphate contacts are provided by His-44 and His-77. Residue Cys-99 coordinates [4Fe-4S] cluster. Residue His-127 participates in (2E)-4-hydroxy-3-methylbut-2-enyl diphosphate binding. A dimethylallyl diphosphate-binding site is contributed by His-127. His-127 contacts isopentenyl diphosphate. The active-site Proton donor is Glu-129. (2E)-4-hydroxy-3-methylbut-2-enyl diphosphate is bound at residue Thr-167. Cys-197 contacts [4Fe-4S] cluster. (2E)-4-hydroxy-3-methylbut-2-enyl diphosphate-binding residues include Ser-225, Ser-226, Asn-227, and Ser-269. Positions 225, 226, 227, and 269 each coordinate dimethylallyl diphosphate. Positions 225, 226, 227, and 269 each coordinate isopentenyl diphosphate.

This sequence belongs to the IspH family. [4Fe-4S] cluster is required as a cofactor.

The catalysed reaction is isopentenyl diphosphate + 2 oxidized [2Fe-2S]-[ferredoxin] + H2O = (2E)-4-hydroxy-3-methylbut-2-enyl diphosphate + 2 reduced [2Fe-2S]-[ferredoxin] + 2 H(+). It carries out the reaction dimethylallyl diphosphate + 2 oxidized [2Fe-2S]-[ferredoxin] + H2O = (2E)-4-hydroxy-3-methylbut-2-enyl diphosphate + 2 reduced [2Fe-2S]-[ferredoxin] + 2 H(+). The protein operates within isoprenoid biosynthesis; dimethylallyl diphosphate biosynthesis; dimethylallyl diphosphate from (2E)-4-hydroxy-3-methylbutenyl diphosphate: step 1/1. Its pathway is isoprenoid biosynthesis; isopentenyl diphosphate biosynthesis via DXP pathway; isopentenyl diphosphate from 1-deoxy-D-xylulose 5-phosphate: step 6/6. Catalyzes the conversion of 1-hydroxy-2-methyl-2-(E)-butenyl 4-diphosphate (HMBPP) into a mixture of isopentenyl diphosphate (IPP) and dimethylallyl diphosphate (DMAPP). Acts in the terminal step of the DOXP/MEP pathway for isoprenoid precursor biosynthesis. The chain is 4-hydroxy-3-methylbut-2-enyl diphosphate reductase from Azoarcus sp. (strain BH72).